The chain runs to 233 residues: Pre-hexon-linking protein VIII (233 aa).

Phosphothreonine; by host is present on threonine 64. Positions 112–163 are excised as a propeptide; that stretch reads ARHSFRYKGRTEPYPSPAIKRVLIRGKGIQLNDEVTSPLGVRPDGVFQLGGS. A Phosphoserine; by host modification is found at serine 180.

Belongs to the adenoviridae hexon-linking protein family. As to quaternary structure, interacts with the peripentonal hexons as well as the hexons in the facets. Part of a complex composed of the core-capsid bridging protein, the endosome lysis protein VI and the hexon-linking protein VIII; these interactions bridge the virus core to the capsid. Cleaved by the viral protease during virion maturation. May cause the middle segment to be shed from the capsid.

The protein localises to the virion. Its subcellular location is the host nucleus. In terms of biological role, structural component of the virion that acts as a cement protein on the capsid interior and which glue the peripentonal hexons and group-of-nine hexons together. The polypeptide is Pre-hexon-linking protein VIII (Homo sapiens (Human)).